Here is a 175-residue protein sequence, read N- to C-terminus: MNLDFIKDRIVAVPDFPKPGIVFRDITPLLADPQGLKMTAKAMAEELKSKGIKPTVIAGTESRGFIFGVALAEVLGLGFVPVRKPGKLPRETYKVSYQLEYGSDSLEIHKDAFKPTDKVLVVDDLLATGGTAKATVQLIEKTQASVAGLIFVIELEDLNGRKVLEGHNVSALVKY.

This sequence belongs to the purine/pyrimidine phosphoribosyltransferase family. Homodimer.

The protein resides in the cytoplasm. It carries out the reaction AMP + diphosphate = 5-phospho-alpha-D-ribose 1-diphosphate + adenine. It participates in purine metabolism; AMP biosynthesis via salvage pathway; AMP from adenine: step 1/1. Catalyzes a salvage reaction resulting in the formation of AMP, that is energically less costly than de novo synthesis. This is Adenine phosphoribosyltransferase from Francisella philomiragia subsp. philomiragia (strain ATCC 25017 / CCUG 19701 / FSC 153 / O#319-036).